We begin with the raw amino-acid sequence, 618 residues long: Probable Xaa-Pro aminopeptidase P (618 aa).

Mn(2+) is bound by residues Asp414, Asp425, Glu523, and Glu537.

The protein belongs to the peptidase M24B family. Mn(2+) serves as cofactor.

It carries out the reaction Release of any N-terminal amino acid, including proline, that is linked to proline, even from a dipeptide or tripeptide.. In terms of biological role, catalyzes the removal of a penultimate prolyl residue from the N-termini of peptides. This is Probable Xaa-Pro aminopeptidase P (AMPP) from Metarhizium robertsii (strain ARSEF 23 / ATCC MYA-3075) (Metarhizium anisopliae (strain ARSEF 23)).